The primary structure comprises 4652 residues: Low-density lipoprotein receptor-related protein 2 (4652 aa).

Residues 1–25 form the signal peptide; the sequence is MERWAAAAACTLLLAFAACLAPASG. Residues 26-4422 are Extracellular-facing; it reads RECLGNEFRC…SKGISPGTTV (4397 aa). LDL-receptor class A domains are found at residues 27 to 63, 66 to 104, 108 to 144, 142 to 181, 183 to 219, 223 to 259, and 267 to 308; these read ECLGNEFRCSNGHCITESWRCDGTRDCLDGSDEIGCP, TCGSTQFHCENEDVCIPLYWVCDGEEDCSNGADEHQRCP, TCSSHHFTCTNGECIPVEYRCDHSTDCLDGTDEINCR, NCRYPVCQQQTCHNGACYNTSQRCDGEIDCRDASDELNCT, RCLRNEFQCGSGECIPRDYVCDHDPDCSDSSDEHSCS, PCKGNEFACSNGFCINQNWVCDGMADCLDNSDEDGCE, and ECYP…RVCD. Cystine bridges form between Cys28/Cys40, Cys35/Cys53, Cys47/Cys62, Cys67/Cys80, Cys74/Cys93, Cys87/Cys103, Cys109/Cys121, Cys116/Cys134, Cys128/Cys143, Cys143/Cys158, Cys153/Cys171, Cys165/Cys180, Cys184/Cys196, Cys191/Cys209, Cys203/Cys218, Cys224/Cys236, Cys231/Cys249, Cys243/Cys258, Cys268/Cys281, Cys275/Cys294, and Cys288/Cys307. N-linked (GlcNAc...) asparagine glycosylation is found at Asn160 and Asn179. A glycan (N-linked (GlcNAc...) asparagine) is linked at Asn341. The region spanning 348 to 386 is the EGF-like 1; calcium-binding domain; the sequence is DFNDCQIWGICDHFCEDRIGHHQCFCAEGYVLEHEQHCR. Intrachain disulfides connect Cys352–Cys362, Cys358–Cys371, and Cys373–Cys385. Asn388 carries N-linked (GlcNAc...) asparagine glycosylation. LDL-receptor class B repeat units lie at residues 436-478, 479-521, 522-568, 569-613, 753-795, 796-837, 838-881, and 882-925; these read SKVF…DWIN, NKLY…DPTV, GYLF…DLVA, KRVY…FEDN, NAIF…DWIS, RNLY…HPIA, GYIF…DWGS, and SRLY…FGEY. Asn771 carries N-linked (GlcNAc...) asparagine glycosylation. A glycan (N-linked (GlcNAc...) asparagine) is linked at Asn866. N-linked (GlcNAc...) asparagine glycosylation occurs at Asn1015. The LDL-receptor class A 8 domain occupies 1025 to 1061; it reads QCGALSFPCNNGRCVPLHYRCDGVDDCHDNSDEVQCG. 3 disulfide bridges follow: Cys1026–Cys1038, Cys1033–Cys1051, and Cys1045–Cys1060. Asn1064 is a glycosylation site (N-linked (GlcNAc...) asparagine). LDL-receptor class A domains follow at residues 1066 to 1104, 1110 to 1146, 1150 to 1186, 1188 to 1225, 1231 to 1269, 1272 to 1308, and 1313 to 1351; these read SCAPSAFACGHGGGECIPSYWRCDNHNDCVDGSDEQNCS, SCRADYFTCDNHMCIPKNWLCDTDNDCGDGSDEKRCD, TCSPTQFHCPNHRCIDLAFVCDGDKDCADGSDESACV, NCTDSQFKCVGSNKCISNTYRCDGVSDCSDHSDEIDCP, MCRQDEFQCREDGICIPDSWECDGHPDCLTGSDEHSGCP, TCPXSRFLCANGNCIFRDWLCDGDNDCRDMSDEKDCP, and LCPSWQWQCPGHSICVNLSSVCDGISDCPHGTDESPLCN. 9 cysteine pairs are disulfide-bonded: Cys1067/Cys1081, Cys1074/Cys1094, Cys1088/Cys1103, Cys1111/Cys1123, Cys1118/Cys1136, Cys1130/Cys1145, Cys1151/Cys1163, Cys1158/Cys1176, and Cys1170/Cys1185. Asn1102 carries an N-linked (GlcNAc...) asparagine glycan. Residues Trp1128, Asp1131, Asp1133, Asp1135, Asp1141, and Glu1142 each coordinate Ca(2+). N-linked (GlcNAc...) asparagine glycosylation occurs at Asn1188. Cystine bridges form between Cys1189–Cys1202, Cys1196–Cys1215, Cys1209–Cys1224, Cys1232–Cys1245, Cys1239–Cys1258, Cys1252–Cys1268, Cys1273–Cys1285, Cys1280–Cys1298, Cys1292–Cys1307, Cys1314–Cys1327, Cys1321–Cys1340, and Cys1334–Cys1350. Ca(2+) is bound by residues Tyr1207, Asp1210, Val1212, Asp1214, Asp1220, and Glu1221. The N-linked (GlcNAc...) asparagine glycan is linked to Asn1329. N-linked (GlcNAc...) asparagine glycans are attached at residues Asn1385, Asn1452, Asn1498, and Asn1552. LDL-receptor class B repeat units lie at residues 1480–1522, 1523–1565, 1568–1611, 1612–1654, 1655–1696, 1789–1831, 1832–1881, 1882–1929, 1930–1971, and 1972–2012; these read GRIF…DWVG, RNLY…DPRV, RVIF…DYPT, RLLY…TIFE, DSIY…VHPA, QFLY…DWLS, RNLY…DPAK, GKLY…DIQE, QKLY…YGPY, and LYYA…YRRR. N-linked (GlcNAc...) asparagine glycans are attached at residues Asn1677 and Asn1809. Residue Asn2053 is glycosylated (N-linked (GlcNAc...) asparagine). LDL-receptor class B repeat units follow at residues 2105 to 2154, 2155 to 2199, 2200 to 2243, 2244 to 2287, 2429 to 2475, 2476 to 2516, 2517 to 2560, 2561 to 2602, and 2603 to 2644; these read GFVY…DWVA, GNLY…DPKN, RYLF…DHNS, GYIY…FGNS, NRIY…DWIG, RRIY…DPCQ, GYMY…DYKE, NLLY…YGQY, and IYWT…VVNN. N-linked (GlcNAc...) asparagine glycans are attached at residues Asn2175 and Asn2222. Asn2485 carries an N-linked (GlcNAc...) asparagine glycan. LDL-receptor class A domains are found at residues 2696 to 2734, 2737 to 2773, 2776 to 2815, 2818 to 2857, 2860 to 2897, 2902 to 2941, 2944 to 2986, 2989 to 3025, 3028 to 3066, and 3071 to 3107; these read RCNSTQFTCLSGYCILESLKCNDIDECGDSSDELETLCA, TCPPTSFTCANGRCIQRHFRCDHYNDCGDNSDESGCR, SCNITTEFSCNNGKCLPLQLVCDGIDHCNDNNTSDEKNCA, TCLPDYIKCANSNVCIPRLFLCDGDNDCGDMSDENPIYCV, TCKNNEFQCTSGSCIPELWHCDGERDCDDGSDEPATCV, TCSSDEFKCDNNRCIQMEWICDGDNDCGDMSDEDGRHHCE, NCSS…QNCT, NCSGTEFRCSNGLCIPNWFRCDRRNDCGDYSDERNCK, ACDENLFTCQNGICTYKSYICDGENDCGDNSDELEHLCH, and TCPPHQFRCNNGNCIEMVKVCNHQADCSDNSDEERCG. 18 disulfide bridges follow: Cys2697–Cys2709, Cys2704–Cys2722, Cys2716–Cys2733, Cys2738–Cys2750, Cys2745–Cys2763, Cys2757–Cys2772, Cys2777–Cys2790, Cys2785–Cys2803, Cys2797–Cys2814, Cys2819–Cys2832, Cys2826–Cys2845, Cys2839–Cys2856, Cys2861–Cys2873, Cys2868–Cys2886, Cys2880–Cys2896, Cys2903–Cys2915, Cys2910–Cys2928, and Cys2922–Cys2940. Asn2698 is a glycosylation site (N-linked (GlcNAc...) asparagine). N-linked (GlcNAc...) asparagine glycosylation occurs at Asn2778. 2 N-linked (GlcNAc...) asparagine glycosylation sites follow: Asn2806 and Asn2807. Asn2944 carries an N-linked (GlcNAc...) asparagine glycan. Intrachain disulfides connect Cys2945/Cys2962, Cys2952/Cys2975, and Cys2969/Cys2985. 2 N-linked (GlcNAc...) asparagine glycosylation sites follow: Asn2984 and Asn2989. Cystine bridges form between Cys2990-Cys3002, Cys2997-Cys3015, Cys3009-Cys3024, Cys3029-Cys3041, Cys3036-Cys3054, Cys3048-Cys3065, Cys3072-Cys3084, Cys3079-Cys3097, and Cys3091-Cys3106. Asn3122 carries N-linked (GlcNAc...) asparagine glycosylation. An EGF-like 2; calcium-binding domain is found at 3149–3189; sequence DIDECKETPSVCSQKCENLLGSYICKCAPGYTREPDGRSCR. Disulfide bonds link Cys3153/Cys3164, Cys3160/Cys3173, and Cys3175/Cys3188. N-linked (GlcNAc...) asparagine glycosylation is found at Asn3208, Asn3254, Asn3312, and Asn3352. LDL-receptor class B repeat units lie at residues 3236-3278, 3279-3321, 3330-3373, 3374-3417, and 3418-3458; these read ERLY…DWVT, RKLY…DKPR, GYVY…DYTN, DLLY…FEDT, and IYWT…YHPY. Asn3435 and Asn3444 each carry an N-linked (GlcNAc...) asparagine glycan. LDL-receptor class A domains follow at residues 3509–3547, 3550–3588, 3591–3629, 3632–3670, 3675–3713, 3716–3753, 3756–3792, 3795–3831, and 3839–3877; these read MCSSTQFLCANNEMCIPIWWKCDGQKDCLDGSDEPNTCP, FCRLGQFQCSDGNCTSSNFICNARQDCPDGSDEDAVLCE, RCESNQWQCANKRCIPESWQCDSLNDCGDNSDEDSSHCA, TCLPGYFKCANGHCIPQSWKCDVDNDCGDYSDEPLQECM, RCDNYTEFDCKTNYRCIPKWAVCNGFDDCRDNSDEQNCE, TCKPSGEFRCTNHHCIPLRWRCDGHNDCGDNSDEENCV, QCSESEFRCDDQTCIPSRWICDQNNDCGDNSDERDCE, TCHPGYFQCSSGHCIPDQMRCDGFADCLDASDEATCP, and YCPATLFECKNHVCVQPSWKCDGDNDCGDGSDEELHLCL. Disulfide bonds link Cys3510–Cys3523, Cys3517–Cys3536, Cys3530–Cys3546, Cys3551–Cys3563, Cys3558–Cys3576, Cys3570–Cys3587, Cys3592–Cys3604, Cys3599–Cys3617, Cys3611–Cys3628, Cys3633–Cys3645, Cys3640–Cys3658, Cys3652–Cys3669, Cys3676–Cys3690, Cys3684–Cys3703, Cys3697–Cys3712, Cys3717–Cys3730, Cys3725–Cys3743, Cys3737–Cys3752, Cys3757–Cys3769, Cys3764–Cys3782, Cys3776–Cys3791, Cys3796–Cys3808, Cys3803–Cys3821, Cys3815–Cys3830, Cys3840–Cys3852, Cys3847–Cys3865, and Cys3859–Cys3876. The N-linked (GlcNAc...) asparagine glycan is linked to Asn3562. The N-linked (GlcNAc...) asparagine glycan is linked to Asn3678. The N-linked (GlcNAc...) asparagine glycan is linked to Asn3878. 2 consecutive LDL-receptor class A domains span residues 3880–3919 and 3925–3961; these read TCDLTNRFRCDNNRCIYRHELCNHEDDCGDGSDEKKENCL and PCTEGEFKCSNGHCISQHLVCDDVDDCGDHFDETGCN. 12 cysteine pairs are disulfide-bonded: Cys3881–Cys3894, Cys3889–Cys3907, Cys3901–Cys3918, Cys3926–Cys3938, Cys3933–Cys3951, Cys3945–Cys3960, Cys3968–Cys3977, Cys3973–Cys3987, Cys3989–Cys4003, Cys4009–Cys4019, Cys4015–Cys4028, and Cys4030–Cys4045. One can recognise an EGF-like 3 domain in the interval 3964–4004; that stretch reads EERSCAENLCEHNCTQLIGGGFICSCRPGFKASSLNRNSCE. Residue Asn3976 is glycosylated (N-linked (GlcNAc...) asparagine). Residues 4005–4046 form the EGF-like 4; calcium-binding domain; sequence DINECEQFGVCPQNCHNTKGSYECTCAEGFRSMSEHYGERCA. Asn4066 carries an N-linked (GlcNAc...) asparagine glycan. LDL-receptor class B repeat units lie at residues 4152 to 4194, 4195 to 4238, and 4240 to 4281; these read RHIY…NPKQ, GLMY…DYVN, and DRIY…FESQ. Asn4325 is a glycosylation site (N-linked (GlcNAc...) asparagine). In terms of domain architecture, EGF-like 5 spans 4375-4409; it reads MPPPCRCMNEGNCYFDKNNLPKCKCPSGYMGEYCE. 3 disulfides stabilise this stretch: Cys4379/Cys4387, Cys4381/Cys4397, and Cys4399/Cys4408. The chain crosses the membrane as a helical span at residues 4423 to 4443; the sequence is AVLVTLILIIIIGGLVALGFF. Residues 4444–4652 lie on the Cytoplasmic side of the membrane; the sequence is HYRKTGSILI…ANLVREDSEA (209 aa). Positions 4450–4459 match the SH3-binding motif; that stretch reads SILISMPRLP. The short motif at 4453 to 4458 is the PxLPxI/L motif 1; mediates interaction with ANKRA2 element; it reads ISMPRL. The PxLPxI/L motif 2; mediates interaction with ANKRA2 signature appears at 4456 to 4461; the sequence is PRLPSL. Ser4460 carries the post-translational modification Phosphoserine. Residues 4518 to 4523 carry the Endocytosis signal motif; it reads FENPMY. Residues 4536 to 4553 show a composition bias toward polar residues; it reads TTTQVSESGNVYNKNYGS. The disordered stretch occupies residues 4536–4652; it reads TTTQVSESGN…ANLVREDSEA (117 aa). Position 4568 is a phosphoserine (Ser4568). The segment at 4588 to 4601 is interaction with DAB2; it reads QNTNFENPIYAETE. The NPXY motif signature appears at 4594 to 4597; sequence NPIY. Residues 4597–4600 carry the SH2-binding motif; the sequence is YAET. The SH3-binding signature appears at 4610 to 4621; that stretch reads VTPPPSPSPPAK. Ser4615 is modified (phosphoserine). Polar residues predominate over residues 4626–4636; the sequence is KGTTPAYSATE. The residue at position 4629 (Thr4629) is a Phosphothreonine. Phosphoserine is present on Ser4650.

Belongs to the LDLR family. As to quaternary structure, binds plasminogen, extracellular matrix components, plasminogen activator-plasminogen activator inhibitor type I complex, apolipoprotein E-enriched beta-VLDL, lipoprotein lipase, lactoferrin, CLU/clusterin and calcium. Forms a multimeric complex together with LRPAP1. Interacts (via PxLPxI/L motif) with ANKRA2 (via ankyrin repeats). Interacts with LRP2BP. Interacts (via NPXY motif) with DAB2; the interaction is not affected by tyrosine phosphorylation of the NPXY motif. Interacts with MB. Interacts with BMP4. Interacts with the Sonic hedgehog protein N-product which is the active product of SHH. Interacts with CST3 in a calcium-dependent manner. Interacts with the vitamin-D binding protein GC/DBP. Interacts with sex hormone-binding protein SHBG. Interacts with angiotensin-2. Also interacts with angiotensin 1-7. Interacts with APOM. Interacts with selenoprotein SEPP1. Interacts with LEP. Interacts with ALB. Interacts with the antiapoptotic protein BIRC5/survivin. Interacts with matrix metalloproteinase MMP2 in complex with metalloproteinase inhibitor TIMP1. In neurons, forms a trimeric complex with APP and APPB1/FE65. Interacts with LDLRAP1/ARH; mediates trafficking of LRP2 to the endocytic recycling compartment. Does not interact with beta-amyloid protein 40 alone but interacts with the complex composed of beta-amyloid protein 40 and CLU/APOJ. Interacts with MDK. Post-translationally, a fraction undergoes proteolytic cleavage of the extracellular domain at the cell membrane to generate a cytoplasmic tail fragment. This is internalized into the early endosome from where it trafficks in an LDLRAP1/ARH-dependent manner to the endocytic recycling compartment (ERC). In the ERC, it is further cleaved by gamma-secretase to release a fragment which translocates to the nucleus and mediates transcriptional repression. N-glycosylation is required for ligand binding.

It localises to the apical cell membrane. It is found in the endosome lumen. Its subcellular location is the membrane. The protein resides in the clathrin-coated pit. The protein localises to the cell projection. It localises to the dendrite. It is found in the axon. Multiligand endocytic receptor. Acts together with CUBN to mediate endocytosis of high-density lipoproteins. Mediates receptor-mediated uptake of polybasic drugs such as aprotinin, aminoglycosides and polymyxin B. In the kidney, mediates the tubular uptake and clearance of leptin. Also mediates transport of leptin across the blood-brain barrier through endocytosis at the choroid plexus epithelium. Endocytosis of leptin in neuronal cells is required for hypothalamic leptin signaling and leptin-mediated regulation of feeding and body weight. Mediates endocytosis and subsequent lysosomal degradation of CST3 in kidney proximal tubule cells. Mediates renal uptake of 25-hydroxyvitamin D3 in complex with the vitamin D3 transporter GC/DBP. Mediates renal uptake of metallothionein-bound heavy metals. Together with CUBN, mediates renal reabsorption of myoglobin. Mediates renal uptake and subsequent lysosomal degradation of APOM. Plays a role in kidney selenium homeostasis by mediating renal endocytosis of selenoprotein SEPP1. Mediates renal uptake of the antiapoptotic protein BIRC5/survivin which may be important for functional integrity of the kidney. Mediates renal uptake of matrix metalloproteinase MMP2 in complex with metalloproteinase inhibitor TIMP1. Mediates endocytosis of Sonic hedgehog protein N-product (ShhN), the active product of SHH. Also mediates ShhN transcytosis. In the embryonic neuroepithelium, mediates endocytic uptake and degradation of BMP4, is required for correct SHH localization in the ventral neural tube and plays a role in patterning of the ventral telencephalon. Required at the onset of neurulation to sequester SHH on the apical surface of neuroepithelial cells of the rostral diencephalon ventral midline and to control PTCH1-dependent uptake and intracellular trafficking of SHH. During neurulation, required in neuroepithelial cells for uptake of folate bound to the folate receptor FOLR1 which is necessary for neural tube closure. In the adult brain, negatively regulates BMP signaling in the subependymal zone which enables neurogenesis to proceed. In astrocytes, mediates endocytosis of ALB which is required for the synthesis of the neurotrophic factor oleic acid. Involved in neurite branching. During optic nerve development, required for SHH-mediated migration and proliferation of oligodendrocyte precursor cells. Mediates endocytic uptake and clearance of SHH in the retinal margin which protects retinal progenitor cells from mitogenic stimuli and keeps them quiescent. Plays a role in reproductive organ development by mediating uptake in reproductive tissues of androgen and estrogen bound to the sex hormone binding protein SHBG. Mediates endocytosis of angiotensin-2. Also mediates endocytosis of angiotensis 1-7. Binds to the complex composed of beta-amyloid protein 40 and CLU/APOJ and mediates its endocytosis and lysosomal degradation. Required for embryonic heart development. Required for normal hearing, possibly through interaction with estrogen in the inner ear. This chain is Low-density lipoprotein receptor-related protein 2, found in Sus scrofa (Pig).